A 519-amino-acid chain; its full sequence is MARAGPAWLLLAIWVVLPSWLSSAKVSSLIERISDPKDLKKLLRTRNNVLVLYSKSEVAAENHLRLLSTVAQAVKGQGTICWVDCGDAESRKLCKKMKVDLSPKDKKVELFHYQDGAFHTEYNRAVTFKSIVAFLKDPKGPPLWEEDPGAKDVVHLDSEKDFRRLLKKEEKPLLIMFYAPWCSMCKRMMPHFQKAATQLRGHAVLAGMNVYSSEFENIKEEYSVRGFPTICYFEKGRFLFQYDNYGSTAEDIVEWLKNPQPPQPQVPETPWADEGGSVYHLTDEDFDQFVKEHSSVLVMFHAPWCGHCKKMKPEFEKAAEALHGEADSSGVLAAVDATVNKALAERFHISEFPTLKYFKNGEKYAVPVLRTKKKFLEWMQNPEAPPPPEPTWEEQQTSVLHLVGDNFRETLKKKKHTLVMFYAPWCPHCKKVIPHFTATADAFKDDRKIACAAVDCVKDKNQDLCQQEAVKGYPTFHYYHYGKFAEKYDSDRTELGFTNYIRALREGDHERLGKKKEEL.

The first 21 residues, 1 to 21, serve as a signal peptide directing secretion; it reads MARAGPAWLLLAIWVVLPSWL. Disulfide bonds link C85–C94, C182–C185, C305–C308, and C426–C429. 3 Thioredoxin domains span residues 134-261, 270-384, and 378-506; these read FLKD…NPQP, PWAD…NPEA, and WMQN…ALRE. A Prevents secretion from ER motif is present at residues 516–519; it reads KEEL.

This sequence belongs to the protein disulfide isomerase family. As to quaternary structure, interacts with CALR (via P-domain).

The protein localises to the endoplasmic reticulum lumen. The enzyme catalyses Catalyzes the rearrangement of -S-S- bonds in proteins.. This is Protein disulfide-isomerase A5 (PDIA5) from Homo sapiens (Human).